Reading from the N-terminus, the 466-residue chain is UDP-N-acetylmuramate--L-alanine ligase (466 aa).

117–123 provides a ligand contact to ATP; it reads GTHGKTT.

This sequence belongs to the MurCDEF family.

The protein resides in the cytoplasm. The enzyme catalyses UDP-N-acetyl-alpha-D-muramate + L-alanine + ATP = UDP-N-acetyl-alpha-D-muramoyl-L-alanine + ADP + phosphate + H(+). The protein operates within cell wall biogenesis; peptidoglycan biosynthesis. In terms of biological role, cell wall formation. This chain is UDP-N-acetylmuramate--L-alanine ligase, found in Streptomyces griseus subsp. griseus (strain JCM 4626 / CBS 651.72 / NBRC 13350 / KCC S-0626 / ISP 5235).